The primary structure comprises 134 residues: ATP synthase epsilon chain (134 aa).

Belongs to the ATPase epsilon chain family. As to quaternary structure, F-type ATPases have 2 components, CF(1) - the catalytic core - and CF(0) - the membrane proton channel. CF(1) has five subunits: alpha(3), beta(3), gamma(1), delta(1), epsilon(1). CF(0) has three main subunits: a, b and c.

The protein localises to the cell membrane. In terms of biological role, produces ATP from ADP in the presence of a proton gradient across the membrane. This is ATP synthase epsilon chain from Listeria welshimeri serovar 6b (strain ATCC 35897 / DSM 20650 / CCUG 15529 / CIP 8149 / NCTC 11857 / SLCC 5334 / V8).